The following is a 155-amino-acid chain: Isotocin-neurophysin IT 1 (155 aa).

An N-terminal signal peptide occupies residues 1 to 19; it reads MTGTAISVCLLFLLSVCSA. Cys-20 and Cys-25 are oxidised to a cystine. Gly-28 is modified (glycine amide). 7 cysteine pairs are disulfide-bonded: Cys-41-Cys-85, Cys-44-Cys-58, Cys-52-Cys-75, Cys-59-Cys-65, Cys-92-Cys-105, Cys-99-Cys-117, and Cys-106-Cys-111.

Belongs to the vasopressin/oxytocin family. In terms of processing, seven disulfide bonds are present in neurophysin.

Isotocin causes contraction of smooth muscles. This is Isotocin-neurophysin IT 1 from Takifugu rubripes (Japanese pufferfish).